Here is a 517-residue protein sequence, read N- to C-terminus: Gamma-1-syntrophin (517 aa).

Residues 57-140 (TVTIRRQTVG…EVTLTVSFLK (84 aa)) enclose the PDZ domain. A PH domain is found at 283–390 (QIVYMGWCEA…WERAFQTATF (108 aa)).

This sequence belongs to the syntrophin family. In terms of assembly, isoform 1, but not isoform 2, interacts with the dystrophin protein DMD and related proteins DTNA and DTNB. Interacts with DGKZ. As to expression, brain specific. In CNS, it is expressed in the perikaryon and proximal portion of the neuronal processes. Strong expression in the hippocampus, neuron-rich dendate granule cells, and pyramidal cell layers. Highly expressed in neurons of the cerebral cortex. Also expressed in the cerebellar cortex, deep cerebellar nuclei, thalamus, and basal ganglia. No expression in muscle cells.

It localises to the cytoplasm. Its subcellular location is the cytoskeleton. The protein resides in the nucleus. In terms of biological role, adapter protein that binds to and probably organizes the subcellular localization of a variety of proteins. May link various receptors to the actin cytoskeleton and the dystrophin glycoprotein complex. May participate in regulating the subcellular location of diacylglycerol kinase-zeta to ensure that diacylglycerol is rapidly inactivated following receptor activation. In Homo sapiens (Human), this protein is Gamma-1-syntrophin (SNTG1).